A 403-amino-acid polypeptide reads, in one-letter code: uncharacterized protein (403 aa).

The first 26 residues, 1 to 26, serve as a signal peptide directing secretion; the sequence is MYKFKTNLFLVIYFIAIFSIESSISS. The Extracellular portion of the chain corresponds to 27–381; it reads FNTEINSNSN…DSDNSSFGIS (355 aa). N-linked (GlcNAc...) asparagine glycosylation is found at N58, N90, N93, N124, N137, N371, and N375. The helical transmembrane segment at 382 to 402 threads the bilayer; that stretch reads IQKYLNSFLNSFIIILIINII. A topological domain (cytoplasmic) is located at residue I403.

The protein resides in the membrane. This is an uncharacterized protein from Dictyostelium discoideum (Social amoeba).